The following is a 54-amino-acid chain: Photosystem II reaction center protein K (54 aa).

Residues 1-17 constitute a propeptide that is removed on maturation; that stretch reads MLLEHVTITLLNNTSFA. Residues 29 to 49 form a helical membrane-spanning segment; that stretch reads LIDVLPIIPLLFLLLAFVWQA.

The protein belongs to the PsbK family. PSII is composed of 1 copy each of membrane proteins PsbA, PsbB, PsbC, PsbD, PsbE, PsbF, PsbH, PsbI, PsbJ, PsbK, PsbL, PsbM, PsbT, PsbY, PsbZ, Psb30/Ycf12, at least 3 peripheral proteins of the oxygen-evolving complex and a large number of cofactors. It forms dimeric complexes.

It localises to the plastid. The protein resides in the chloroplast thylakoid membrane. Its function is as follows. One of the components of the core complex of photosystem II (PSII). PSII is a light-driven water:plastoquinone oxidoreductase that uses light energy to abstract electrons from H(2)O, generating O(2) and a proton gradient subsequently used for ATP formation. It consists of a core antenna complex that captures photons, and an electron transfer chain that converts photonic excitation into a charge separation. The polypeptide is Photosystem II reaction center protein K (Euglena mutabilis).